Here is a 195-residue protein sequence, read N- to C-terminus: Pyruvoyl-dependent arginine decarboxylase AaxB (195 aa).

Serine 53 carries the pyruvic acid (Ser) modification.

Belongs to the pyruvoyl-dependent arginine decarboxylase family. As to quaternary structure, trimer of an alpha-beta dimer. It depends on pyruvate as a cofactor.

The protein resides in the cytoplasm. The enzyme catalyses L-arginine + H(+) = agmatine + CO2. In terms of biological role, part of the AaxABC system, catalyzes the decarboxylation of L-arginine. The arginine uptake by the bacterium in the macrophage may be a virulence factor against the host innate immune response. The polypeptide is Pyruvoyl-dependent arginine decarboxylase AaxB (aaxB) (Chlamydia trachomatis serovar L2 (strain ATCC VR-902B / DSM 19102 / 434/Bu)).